The sequence spans 1464 residues: Gag-Pol polyprotein (1464 aa).

A lipid anchor (N-myristoyl glycine; by host) is attached at Gly2. Positions 7–31 (VLSGKKTDELEKVRLRPGGKKRYML) are interaction with Gp41. The Nuclear export signal motif lies at 16 to 22 (LEKVRLR). The Nuclear localization signal signature appears at 26–32 (KKRYMLK). Tyr130 bears the Phosphotyrosine; by host mark. The interval 186-223 (NCVGEHQAAMQIIREIINEEAADWDQQHPSPGPMPAGQ) is interaction with human PPIA/CYPA and NUP153. The tract at residues 274–360 (YNPTNILDIK…GGPGQKARLM (87 aa)) is dimerization/Multimerization of capsid protein p24. 2 consecutive CCHC-type zinc fingers follow at residues 387 to 404 (VTCW…QCKA) and 408 to 425 (QGCW…KCPE). Basic and acidic residues predominate over residues 483 to 499 (AKELHATREEAEGEQRE). The segment at 483–504 (AKELHATREEAEGEQRETLQGG) is disordered. The segment at 511-515 (PQFSL) is dimerization of protease. One can recognise a Peptidase A2 domain in the interval 531-600 (EVLLDTGADD…PINIFGRNIL (70 aa)). Residue Asp535 is the For protease activity; shared with dimeric partner of the active site. Dimerization of protease stretches follow at residues 559 to 565 (GIGGFIN) and 598 to 610 (NILN…LNFP). A Reverse transcriptase domain is found at 654–844 (GQLEEAPPTN…PFKWMGYELW (191 aa)). Residues Asp719, Asp794, and Asp795 each contribute to the Mg(2+) site. The tract at residues 836 to 844 (FKWMGYELW) is RT 'primer grip'. Positions 1006 to 1022 (WDQWWTDYWQVTWIPEW) match the Tryptophan repeat motif motif. Residues 1042–1165 (LEGVETYYTD…VDHLVSQGIR (124 aa)) enclose the RNase H type-1 domain. Mg(2+) is bound by residues Asp1051, Glu1086, Asp1106, and Asp1157. An Integrase-type zinc finger spans residues 1171 to 1212 (EKIEPAQEEHEKYHNNVKELVHKFGIPQLVARQIVNSCDKCQ). Positions 1180, 1184, 1208, and 1211 each coordinate Zn(2+). The 152-residue stretch at 1222 to 1373 (VNSELGTWQM…PAERIVNMIT (152 aa)) folds into the Integrase catalytic domain. Residues Asp1232, Asp1284, and Glu1320 each contribute to the Mg(2+) site. Residues 1391 to 1438 (FRVYYREGRDQLWKGPGDLLWKGEGAVIIKVGTEIKVIPRRKAKIIRN) constitute a DNA-binding region (integrase-type).

Homotrimer; further assembles as hexamers of trimers. Interacts with gp41 (via C-terminus). Interacts with host CALM1; this interaction induces a conformational change in the Matrix protein, triggering exposure of the myristate group. Interacts with host AP3D1; this interaction allows the polyprotein trafficking to multivesicular bodies during virus assembly. Part of the pre-integration complex (PIC) which is composed of viral genome, matrix protein, Vpr and integrase. In terms of assembly, homodimer; the homodimer further multimerizes as homohexamers or homopentamers. Interacts with human PPIA/CYPA. Interacts with human NUP153. Interacts with host PDZD8; this interaction stabilizes the capsid. Interacts with monkey TRIM5; this interaction destabilizes the capsid. As to quaternary structure, homodimer, whose active site consists of two apposed aspartic acid residues. Heterodimer of p66 RT and p51 RT (RT p66/p51). Heterodimerization of RT is essential for DNA polymerase activity. The overall folding of the subdomains is similar in p66 RT and p51 RT but the spatial arrangements of the subdomains are dramatically different. In terms of assembly, homotetramer; may further associate as a homohexadecamer. Part of the pre-integration complex (PIC) which is composed of viral genome, matrix protein, Vpr and integrase. Interacts with human SMARCB1/INI1 and human PSIP1/LEDGF isoform 1. Interacts with human KPNA3; this interaction might play a role in nuclear import of the pre-integration complex. Interacts with human NUP153; this interaction might play a role in nuclear import of the pre-integration complex. It depends on Mg(2+) as a cofactor. In terms of processing, specific enzymatic cleavages by the viral protease yield mature proteins. The protease is released by autocatalytic cleavage. The polyprotein is cleaved during and after budding, this process is termed maturation. Proteolytic cleavage of p66 RT removes the RNase H domain to yield the p51 RT subunit. Nucleocapsid protein p7 might be further cleaved after virus entry.

The protein localises to the host cell membrane. It is found in the host endosome. It localises to the host multivesicular body. The protein resides in the virion membrane. Its subcellular location is the host nucleus. The protein localises to the host cytoplasm. It is found in the virion. It catalyses the reaction Endopeptidase for which the P1 residue is preferably hydrophobic.. It carries out the reaction Endohydrolysis of RNA in RNA/DNA hybrids. Three different cleavage modes: 1. sequence-specific internal cleavage of RNA. Human immunodeficiency virus type 1 and Moloney murine leukemia virus enzymes prefer to cleave the RNA strand one nucleotide away from the RNA-DNA junction. 2. RNA 5'-end directed cleavage 13-19 nucleotides from the RNA end. 3. DNA 3'-end directed cleavage 15-20 nucleotides away from the primer terminus.. The catalysed reaction is 3'-end directed exonucleolytic cleavage of viral RNA-DNA hybrid.. The enzyme catalyses DNA(n) + a 2'-deoxyribonucleoside 5'-triphosphate = DNA(n+1) + diphosphate. With respect to regulation, protease: The viral protease is inhibited by many synthetic protease inhibitors (PIs), such as amprenavir, atazanavir, indinavir, loprinavir, nelfinavir, ritonavir and saquinavir. Use of protease inhibitors in tritherapy regimens permit more ambitious therapeutic strategies. Reverse transcriptase/ribonuclease H: RT can be inhibited either by nucleoside RT inhibitors (NRTIs) or by non nucleoside RT inhibitors (NNRTIs). NRTIs act as chain terminators, whereas NNRTIs inhibit DNA polymerization by binding a small hydrophobic pocket near the RT active site and inducing an allosteric change in this region. Classical NRTIs are abacavir, adefovir (PMEA), didanosine (ddI), lamivudine (3TC), stavudine (d4T), tenofovir (PMPA), zalcitabine (ddC), and zidovudine (AZT). Classical NNRTIs are atevirdine (BHAP U-87201E), delavirdine, efavirenz (DMP-266), emivirine (I-EBU), and nevirapine (BI-RG-587). The tritherapies used as a basic effective treatment of AIDS associate two NRTIs and one NNRTI. Its function is as follows. Mediates, with Gag polyprotein, the essential events in virion assembly, including binding the plasma membrane, making the protein-protein interactions necessary to create spherical particles, recruiting the viral Env proteins, and packaging the genomic RNA via direct interactions with the RNA packaging sequence (Psi). Gag-Pol polyprotein may regulate its own translation, by the binding genomic RNA in the 5'-UTR. At low concentration, the polyprotein would promote translation, whereas at high concentration, the polyprotein would encapsidate genomic RNA and then shut off translation. In terms of biological role, targets the polyprotein to the plasma membrane via a multipartite membrane-binding signal, that includes its myristoylated N-terminus. Matrix protein is part of the pre-integration complex. Implicated in the release from host cell mediated by Vpu. Binds to RNA. Forms the conical core that encapsulates the genomic RNA-nucleocapsid complex in the virion. Most core are conical, with only 7% tubular. The core is constituted by capsid protein hexamer subunits. The core is disassembled soon after virion entry. Host restriction factors such as TRIM5-alpha or TRIMCyp bind retroviral capsids and cause premature capsid disassembly, leading to blocks in reverse transcription. Capsid restriction by TRIM5 is one of the factors which restricts HIV-1 to the human species. Host PIN1 apparently facilitates the virion uncoating. On the other hand, interactions with PDZD8 or CYPA stabilize the capsid. Functionally, encapsulates and protects viral dimeric unspliced genomic RNA (gRNA). Binds these RNAs through its zinc fingers. Acts as a nucleic acid chaperone which is involved in rearangement of nucleic acid secondary structure during gRNA retrotranscription. Also facilitates template switch leading to recombination. As part of the polyprotein, participates in gRNA dimerization, packaging, tRNA incorporation and virion assembly. Its function is as follows. Aspartyl protease that mediates proteolytic cleavages of Gag and Gag-Pol polyproteins during or shortly after the release of the virion from the plasma membrane. Cleavages take place as an ordered, step-wise cascade to yield mature proteins. This process is called maturation. Displays maximal activity during the budding process just prior to particle release from the cell. Also cleaves Nef and Vif, probably concomitantly with viral structural proteins on maturation of virus particles. Hydrolyzes host EIF4GI and PABP1 in order to shut off the capped cellular mRNA translation. The resulting inhibition of cellular protein synthesis serves to ensure maximal viral gene expression and to evade host immune response. In terms of biological role, multifunctional enzyme that converts the viral RNA genome into dsDNA in the cytoplasm, shortly after virus entry into the cell. This enzyme displays a DNA polymerase activity that can copy either DNA or RNA templates, and a ribonuclease H (RNase H) activity that cleaves the RNA strand of RNA-DNA heteroduplexes in a partially processive 3' to 5' endonucleasic mode. Conversion of viral genomic RNA into dsDNA requires many steps. A tRNA(3)-Lys binds to the primer-binding site (PBS) situated at the 5'-end of the viral RNA. RT uses the 3' end of the tRNA primer to perform a short round of RNA-dependent minus-strand DNA synthesis. The reading proceeds through the U5 region and ends after the repeated (R) region which is present at both ends of viral RNA. The portion of the RNA-DNA heteroduplex is digested by the RNase H, resulting in a ssDNA product attached to the tRNA primer. This ssDNA/tRNA hybridizes with the identical R region situated at the 3' end of viral RNA. This template exchange, known as minus-strand DNA strong stop transfer, can be either intra- or intermolecular. RT uses the 3' end of this newly synthesized short ssDNA to perform the RNA-dependent minus-strand DNA synthesis of the whole template. RNase H digests the RNA template except for two polypurine tracts (PPTs) situated at the 5'-end and near the center of the genome. It is not clear if both polymerase and RNase H activities are simultaneous. RNase H probably can proceed both in a polymerase-dependent (RNA cut into small fragments by the same RT performing DNA synthesis) and a polymerase-independent mode (cleavage of remaining RNA fragments by free RTs). Secondly, RT performs DNA-directed plus-strand DNA synthesis using the PPTs that have not been removed by RNase H as primers. PPTs and tRNA primers are then removed by RNase H. The 3' and 5' ssDNA PBS regions hybridize to form a circular dsDNA intermediate. Strand displacement synthesis by RT to the PBS and PPT ends produces a blunt ended, linear dsDNA copy of the viral genome that includes long terminal repeats (LTRs) at both ends. Catalyzes viral DNA integration into the host chromosome, by performing a series of DNA cutting and joining reactions. This enzyme activity takes place after virion entry into a cell and reverse transcription of the RNA genome in dsDNA. The first step in the integration process is 3' processing. This step requires a complex comprising the viral genome, matrix protein, Vpr and integrase. This complex is called the pre-integration complex (PIC). The integrase protein removes 2 nucleotides from each 3' end of the viral DNA, leaving recessed CA OH's at the 3' ends. In the second step, the PIC enters cell nucleus. This process is mediated through integrase and Vpr proteins, and allows the virus to infect a non dividing cell. This ability to enter the nucleus is specific of lentiviruses, other retroviruses cannot and rely on cell division to access cell chromosomes. In the third step, termed strand transfer, the integrase protein joins the previously processed 3' ends to the 5' ends of strands of target cellular DNA at the site of integration. The 5'-ends are produced by integrase-catalyzed staggered cuts, 5 bp apart. A Y-shaped, gapped, recombination intermediate results, with the 5'-ends of the viral DNA strands and the 3' ends of target DNA strands remaining unjoined, flanking a gap of 5 bp. The last step is viral DNA integration into host chromosome. This involves host DNA repair synthesis in which the 5 bp gaps between the unjoined strands are filled in and then ligated. Since this process occurs at both cuts flanking the HIV genome, a 5 bp duplication of host DNA is produced at the ends of HIV-1 integration. Alternatively, Integrase may catalyze the excision of viral DNA just after strand transfer, this is termed disintegration. In Human immunodeficiency virus type 2 subtype B (isolate EHO) (HIV-2), this protein is Gag-Pol polyprotein (gag-pol).